A 360-amino-acid chain; its full sequence is Protein Wnt-2 (360 aa).

Residues 1-25 (MNAPLGGIWPWLPLLLTWLTPEVSS) form the signal peptide. 11 disulfides stabilise this stretch: cysteine 76–cysteine 87, cysteine 127–cysteine 135, cysteine 137–cysteine 157, cysteine 206–cysteine 220, cysteine 208–cysteine 215, cysteine 278–cysteine 309, cysteine 294–cysteine 304, cysteine 308–cysteine 348, cysteine 324–cysteine 339, cysteine 326–cysteine 336, and cysteine 331–cysteine 332. Serine 212 carries the O-palmitoleoyl serine; by PORCN lipid modification. N-linked (GlcNAc...) asparagine glycosylation occurs at asparagine 295.

This sequence belongs to the Wnt family. Palmitoleoylation is required for efficient binding to frizzled receptors. Depalmitoleoylation leads to Wnt signaling pathway inhibition.

The protein resides in the secreted. The protein localises to the extracellular space. Its subcellular location is the extracellular matrix. Its function is as follows. Ligand for members of the frizzled family of seven transmembrane receptors. Functions in the canonical Wnt signaling pathway that results in activation of transcription factors of the TCF/LEF family. Functions as a upstream regulator of FGF10 expression. Plays an important role in embryonic lung development. May contribute to embryonic brain development by regulating the proliferation of dopaminergic precursors and neurons. The polypeptide is Protein Wnt-2 (WNT2) (Felis catus (Cat)).